The sequence spans 189 residues: UPF0398 protein LVIS_0849 (189 aa).

It belongs to the UPF0398 family.

This is UPF0398 protein LVIS_0849 from Levilactobacillus brevis (strain ATCC 367 / BCRC 12310 / CIP 105137 / JCM 1170 / LMG 11437 / NCIMB 947 / NCTC 947) (Lactobacillus brevis).